The sequence spans 92 residues: Larval cuticle protein 9 (92 aa).

Positions 1 to 16 are cleaved as a signal peptide; the sequence is MKFVIVLACLLAVVFA. The Chitin-binding type R&amp;R domain occupies 31-92; it reads LLDFNYAYEL…TGYHPKVVEA (62 aa).

Component of the cuticle of the larva. This is Larval cuticle protein 9 (Lcp9) from Drosophila melanogaster (Fruit fly).